A 624-amino-acid chain; its full sequence is MLSRVARCSRTLNQVTRNGQSGLFSAVLRTSIRQNSTDSPASNNANEIYTKLSDTKDPQRNQFFQYTWGSWLTNDKSKKKQRETTFSIEGLTLFIDRINQLESKLAQPKSLEGAFVLANNKELLGSTKDKVIVRSIASIHEGKHHRVYKITLNTGKELVLRIPYKLDSDVAIASKLKSEVATTDFLKLKLGLNVPRVLAYGVDSNNEIKSPFILQEFISGELLMKKWHPLLPDSEETNKCLHEVIDPIAQFQNKILSVTFNKFGSLYFHDDVEGSLQNDVPYEGETDSALSNRWRIGPSVERQFTRNKNKLQQSIIDQYNGPWDASNPTAVLESVADIELENAKSKLSLINADAGANENDRALITKQIKTFENLKKISPQLINDKSKSIMNVEVLFKPRLYIPDLDPLNVIQHSDTENYFIDFEGSTIKPFILTSYPKFVAYQGAKIYNLEEDVPGYKEMEELEKQQYEFMYYKTRNERMWEFELNKYRHDLIAIASPHIKVLKSPYLQALDVKNGKDYLYVEGSIVQLQAMWEAYVANELVNSKDTKFPIEYTAEYLDQHQQELSDYQLETVSSPFSATGGWIPQDMFDTLKAQGILVETKDGNYKVETEKVLENPPAQPEEK.

Residues 1 to 34 (MLSRVARCSRTLNQVTRNGQSGLFSAVLRTSIRQ) constitute a mitochondrion transit peptide.

This sequence belongs to the AIM9 family.

It is found in the mitochondrion. The chain is Altered inheritance of mitochondria protein 9, mitochondrial (AIM9) from Candida albicans (strain WO-1) (Yeast).